A 542-amino-acid polypeptide reads, in one-letter code: MFKSVLYIGLSWVLVCFAQPDISTLASVICCMCGYGLLWRGLLSLVDSSSWRKIWCLAFFWTWSVEGFHFSWMLEDFYVGTSIYFVWCLLISYLAVTFASFSCLVVLCFRKQYWGALFWLPGVWVAIESVRYYGLLSGVSFDFIGWPLAATAYGRQFGSFFGWAGQSFVVIATNLGCCSVLVFRKSFSYGLWLVCCAFPYFLGGTYYEYVRRHFSNEEVLRVAIVQPGYSPHMQGARTASAIWSNLVSLCQGICPPVDVIVFPEVSVPFGLHRQAYSFHENQQVLESLVPNKFWNEFFTNLDWIRALSERFQCAVIMGMERWEDKNGVMHLYNAAECLSLQGEVTSYDKRILVPGGEYIPGGKFGFSLCKAFFPEFALPFQRLPGEKSGIVQITERIKAGISICYEETFGYAILPYKRQKADILVNLTNDGWYPHSRLPLVHFYHGVLRNQELGMPCIRACHTGVSAAVDSLGRIVGVLPWESKTCPVCPDVLQVSVPVYSYPTIYAKFGDAPLLFVAVSSVLGVVGYFLKRRGKTLTGSDI.

Helical transmembrane passes span 26–46, 54–74, 89–109, 113–133, 163–183, and 187–207; these read ASVI…LSLV, IWCL…SWML, LLIS…VLCF, YWGA…VRYY, WAGQ…VLVF, and FSYG…GTYY. Residues 220 to 499 enclose the CN hydrolase domain; the sequence is LRVAIVQPGY…PDVLQVSVPV (280 aa). Glu264 (proton acceptor) is an active-site residue. Residue Lys349 is part of the active site. Cys404 acts as the Nucleophile in catalysis. The chain crosses the membrane as a helical span at residues 509-529; the sequence is FGDAPLLFVAVSSVLGVVGYF.

It belongs to the CN hydrolase family. Apolipoprotein N-acyltransferase subfamily.

Its subcellular location is the cell inner membrane. The enzyme catalyses N-terminal S-1,2-diacyl-sn-glyceryl-L-cysteinyl-[lipoprotein] + a glycerophospholipid = N-acyl-S-1,2-diacyl-sn-glyceryl-L-cysteinyl-[lipoprotein] + a 2-acyl-sn-glycero-3-phospholipid + H(+). The protein operates within protein modification; lipoprotein biosynthesis (N-acyl transfer). In terms of biological role, catalyzes the phospholipid dependent N-acylation of the N-terminal cysteine of apolipoprotein, the last step in lipoprotein maturation. This Chlamydia muridarum (strain MoPn / Nigg) protein is Apolipoprotein N-acyltransferase.